Reading from the N-terminus, the 191-residue chain is MEKNQRKKRSDAEYNQQIILTTMEDLLEQGEDISTKKMSDIAKISGVGVGTLYRHFESKTLLCQAIMDKKVDQMFIEIEDILAENTQWPVRDKINVILTKYLDLKEANFTTLNFIEKSSSHSSSVINIPFFERLKNLLIQQFENVHSIADLDFKLNLMLNAFSSDFYYFVKHNQKLTKQQFLDKLLDLYLK.

The region spanning 12–74 (AEYNQQIILT…AIMDKKVDQM (63 aa)) is the HTH tetR-type domain. Residues 37–56 (KMSDIAKISGVGVGTLYRHF) constitute a DNA-binding region (H-T-H motif).

The polypeptide is HTH-type transcriptional regulator SAR0097 (Staphylococcus aureus (strain MRSA252)).